We begin with the raw amino-acid sequence, 91 residues long: Small ribosomal subunit protein uS19 (91 aa).

This sequence belongs to the universal ribosomal protein uS19 family.

Functionally, protein S19 forms a complex with S13 that binds strongly to the 16S ribosomal RNA. This is Small ribosomal subunit protein uS19 from Prochlorococcus marinus (strain MIT 9211).